A 236-amino-acid polypeptide reads, in one-letter code: Glycoprotein U23 (236 aa).

A signal peptide spans 1 to 17 (MLFLSFLLVCLCEEVRM). 3 N-linked (GlcNAc...) asparagine; by host glycosylation sites follow: asparagine 67, asparagine 80, and asparagine 103. A helical transmembrane segment spans residues 184-204 (LVIWIGGISFIGAFVILIVIL).

It localises to the membrane. This chain is Glycoprotein U23 (U23), found in Human herpesvirus 6A (strain Uganda-1102) (HHV-6 variant A).